The primary structure comprises 122 residues: Large ribosomal subunit protein uL22 (122 aa).

Residues 103-122 (VEGKEMKSSKSHKKNQAEGK) are disordered.

The protein belongs to the universal ribosomal protein uL22 family. In terms of assembly, part of the 50S ribosomal subunit.

Its function is as follows. This protein binds specifically to 23S rRNA; its binding is stimulated by other ribosomal proteins, e.g. L4, L17, and L20. It is important during the early stages of 50S assembly. It makes multiple contacts with different domains of the 23S rRNA in the assembled 50S subunit and ribosome. In terms of biological role, the globular domain of the protein is located near the polypeptide exit tunnel on the outside of the subunit, while an extended beta-hairpin is found that lines the wall of the exit tunnel in the center of the 70S ribosome. In Helicobacter pylori (strain P12), this protein is Large ribosomal subunit protein uL22.